We begin with the raw amino-acid sequence, 87 residues long: Acyl-CoA-binding protein (87 aa).

Serine 2 is subject to N-acetylserine. The 86-residue stretch at 2-87 (SQAEFEKAAE…VEELKKKYGI (86 aa)) folds into the ACB domain. Lysine 8 bears the N6-acetyllysine; alternate mark. An N6-succinyllysine; alternate modification is found at lysine 8. Lysine 14 serves as a coordination point for an acyl-CoA. The residue at position 17 (lysine 17) is an N6-succinyllysine. N6-acetyllysine is present on lysine 19. Tyrosine 29 bears the Phosphotyrosine mark. An acyl-CoA is bound by residues 29–33 (YSHYK), lysine 51, lysine 55, and tyrosine 74. At lysine 51 the chain carries N6-acetyllysine. An N6-acetyllysine; alternate modification is found at lysine 55. At lysine 55 the chain carries N6-succinyllysine; alternate. Lysine 55 bears the N6-(2-hydroxyisobutyryl)lysine; alternate mark. Residue lysine 55 is modified to N6-malonyllysine; alternate. Residue lysine 77 is modified to N6-acetyllysine; alternate. Lysine 77 bears the N6-succinyllysine; alternate mark.

Belongs to the ACBP family. As to quaternary structure, monomer.

It localises to the endoplasmic reticulum. The protein resides in the golgi apparatus. Functionally, binds medium- and long-chain acyl-CoA esters with very high affinity and may function as an intracellular carrier of acyl-CoA esters. It is also able to displace diazepam from the benzodiazepine (BZD) recognition site located on the GABA type A receptor. It is therefore possible that this protein also acts as a neuropeptide to modulate the action of the GABA receptor. In terms of biological role, DBI(32-86) has antibacterial properties. This chain is Acyl-CoA-binding protein (DBI), found in Sus scrofa (Pig).